A 132-amino-acid polypeptide reads, in one-letter code: Peptide methionine sulfoxide reductase MsrB (132 aa).

Positions 8–130 (LDSWREELTE…NSASLKLVPR (123 aa)) constitute a MsrB domain. Zn(2+)-binding residues include C47, C50, C96, and C99. The active-site Nucleophile is C119.

This sequence belongs to the MsrB Met sulfoxide reductase family. Zn(2+) is required as a cofactor.

It catalyses the reaction L-methionyl-[protein] + [thioredoxin]-disulfide + H2O = L-methionyl-(R)-S-oxide-[protein] + [thioredoxin]-dithiol. In Pseudomonas paraeruginosa (strain DSM 24068 / PA7) (Pseudomonas aeruginosa (strain PA7)), this protein is Peptide methionine sulfoxide reductase MsrB.